A 540-amino-acid chain; its full sequence is NXPE family member 1 (540 aa).

A signal peptide spans Met1–Ser22. N-linked (GlcNAc...) asparagine glycosylation is found at Asn24, Asn42, Asn87, Asn155, Asn205, and Asn291.

The protein belongs to the NXPE family. As to expression, intestine, and to a lesser extent in kidney.

It is found in the secreted. The protein is NXPE family member 1 (NXPE1) of Oryctolagus cuniculus (Rabbit).